Here is a 192-residue protein sequence, read N- to C-terminus: Elongation factor P (192 aa).

The protein belongs to the elongation factor P family.

The protein localises to the cytoplasm. It participates in protein biosynthesis; polypeptide chain elongation. Functionally, involved in peptide bond synthesis. Stimulates efficient translation and peptide-bond synthesis on native or reconstituted 70S ribosomes in vitro. Probably functions indirectly by altering the affinity of the ribosome for aminoacyl-tRNA, thus increasing their reactivity as acceptors for peptidyl transferase. This Borrelia garinii subsp. bavariensis (strain ATCC BAA-2496 / DSM 23469 / PBi) (Borreliella bavariensis) protein is Elongation factor P.